A 229-amino-acid polypeptide reads, in one-letter code: Large ribosomal subunit protein uL1 (229 aa).

Belongs to the universal ribosomal protein uL1 family. Part of the 50S ribosomal subunit.

Its function is as follows. Binds directly to 23S rRNA. The L1 stalk is quite mobile in the ribosome, and is involved in E site tRNA release. Protein L1 is also a translational repressor protein, it controls the translation of the L11 operon by binding to its mRNA. This is Large ribosomal subunit protein uL1 from Streptococcus pneumoniae (strain JJA).